A 197-amino-acid chain; its full sequence is Thymidylate kinase (197 aa).

ATP is bound at residue 7–14 (GIDGCGKS).

It belongs to the thymidylate kinase family.

It carries out the reaction dTMP + ATP = dTDP + ADP. Functionally, phosphorylation of dTMP to form dTDP in both de novo and salvage pathways of dTTP synthesis. The sequence is that of Thymidylate kinase from Fervidobacterium nodosum (strain ATCC 35602 / DSM 5306 / Rt17-B1).